The chain runs to 162 residues: UPF0460 protein y4xD (162 aa).

Belongs to the UPF0460 family.

The protein is UPF0460 protein y4xD of Sinorhizobium fredii (strain NBRC 101917 / NGR234).